A 412-amino-acid chain; its full sequence is uncharacterized protein (412 aa).

His-49 lines the Zn(2+) pocket. Glu-52 functions as the Proton acceptor in the catalytic mechanism. His-53 and Glu-129 together coordinate Zn(2+).

The protein belongs to the peptidase M16 family. It depends on Zn(2+) as a cofactor.

This is an uncharacterized protein from Rickettsia typhi (strain ATCC VR-144 / Wilmington).